The primary structure comprises 146 residues: VHWTAEEKSAITAIWGKVDVAAIGGEALCRLLIVYPWTQRFFTSFGNLSNAAAIQSNAQVKAHGKKVFTAFGDAVKNPEGVKDTFAKLSELHCDKLHVDPVNFKLLGQILITVLAAHFGKDFTPNVQAAYQKLVSVVAHALAHQYH.

The region spanning 2–146 is the Globin domain; sequence HWTAEEKSAI…VAHALAHQYH (145 aa). Heme b-binding residues include H63 and H92.

This sequence belongs to the globin family. In terms of assembly, heterotetramer of two alpha chains and two beta chains. Oxygenation results in dissociation to dimers. In terms of tissue distribution, red blood cells.

Functionally, involved in oxygen transport from the lung to the various peripheral tissues. The protein is Hemoglobin subunit beta (HBB) of Erythrolamprus miliaris (South American water snake).